We begin with the raw amino-acid sequence, 710 residues long: Prolyl endopeptidase (710 aa).

Met-1 is modified (N-acetylmethionine). Lys-157 bears the N6-acetyllysine mark. Residues Ser-554, Asp-641, and His-680 each act as charge relay system in the active site.

This sequence belongs to the peptidase S9A family. Expressed in all tissues tested: uterus, kidney, heart, lung, small intestine, smooth muscle, liver, spleen, thymus, adrenal, pituitary and whole brain.

Its subcellular location is the cytoplasm. It carries out the reaction Hydrolysis of Pro-|-Xaa &gt;&gt; Ala-|-Xaa in oligopeptides.. Inhibited by DFP, Z-Pro-prolinal and poststatin, but not by PMSF, SBTI, EDTA, leupeptin, E-64 and pepstatin. Cleaves peptide bonds on the C-terminal side of prolyl residues within peptides that are up to approximately 30 amino acids long. Has high activity on the succinyl- (suc-) peptide-4-methylcoumaryl-7-amide (MCA) substrates suc-Gly-Pro-Leu-Gly-Pro-MCA, suc-Gly-Pro-MCA and suc-Ala-Ala-Ala-MCA. The polypeptide is Prolyl endopeptidase (Rattus norvegicus (Rat)).